A 155-amino-acid chain; its full sequence is 6,7-dimethyl-8-ribityllumazine synthase (155 aa).

5-amino-6-(D-ribitylamino)uracil-binding positions include F22, 57–59 (AVE), and 81–83 (TVI). 86 to 87 (GT) serves as a coordination point for (2S)-2-hydroxy-3-oxobutyl phosphate. The active-site Proton donor is H89. F114 serves as a coordination point for 5-amino-6-(D-ribitylamino)uracil. (2S)-2-hydroxy-3-oxobutyl phosphate is bound at residue R128.

This sequence belongs to the DMRL synthase family. As to quaternary structure, forms an icosahedral capsid composed of 60 subunits, arranged as a dodecamer of pentamers.

It catalyses the reaction (2S)-2-hydroxy-3-oxobutyl phosphate + 5-amino-6-(D-ribitylamino)uracil = 6,7-dimethyl-8-(1-D-ribityl)lumazine + phosphate + 2 H2O + H(+). Its pathway is cofactor biosynthesis; riboflavin biosynthesis; riboflavin from 2-hydroxy-3-oxobutyl phosphate and 5-amino-6-(D-ribitylamino)uracil: step 1/2. Its function is as follows. Catalyzes the formation of 6,7-dimethyl-8-ribityllumazine by condensation of 5-amino-6-(D-ribitylamino)uracil with 3,4-dihydroxy-2-butanone 4-phosphate. This is the penultimate step in the biosynthesis of riboflavin. In Psychromonas ingrahamii (strain DSM 17664 / CCUG 51855 / 37), this protein is 6,7-dimethyl-8-ribityllumazine synthase.